A 62-amino-acid polypeptide reads, in one-letter code: MAACKDAVKVKTLSGKEVELVPKKVWQLSPKGRKGVKVGLFQDPETGKYFRAKVPDDYPICG.

This sequence belongs to the Cren7 family. In terms of assembly, monomer. In terms of processing, methylated at multiple sites, to varying extents.

It is found in the chromosome. The protein resides in the cytoplasm. Its function is as follows. A chromatin protein, binds double-stranded DNA without sequence specificity. Constrains negative DNA supercoils. The sequence is that of Chromatin protein Cren7 from Staphylothermus marinus (strain ATCC 43588 / DSM 3639 / JCM 9404 / F1).